A 261-amino-acid polypeptide reads, in one-letter code: 3-methyl-2-oxobutanoate hydroxymethyltransferase (261 aa).

Asp-42 and Asp-81 together coordinate Mg(2+). 3-methyl-2-oxobutanoate-binding positions include Asp-42–Ser-43, Asp-81, and Lys-110. Glu-112 lines the Mg(2+) pocket. Glu-179 (proton acceptor) is an active-site residue.

The protein belongs to the PanB family. In terms of assembly, homodecamer; pentamer of dimers. It depends on Mg(2+) as a cofactor.

Its subcellular location is the cytoplasm. It carries out the reaction 3-methyl-2-oxobutanoate + (6R)-5,10-methylene-5,6,7,8-tetrahydrofolate + H2O = 2-dehydropantoate + (6S)-5,6,7,8-tetrahydrofolate. It participates in cofactor biosynthesis; coenzyme A biosynthesis. Its function is as follows. Catalyzes the reversible reaction in which hydroxymethyl group from 5,10-methylenetetrahydrofolate is transferred onto alpha-ketoisovalerate to form ketopantoate. This is 3-methyl-2-oxobutanoate hydroxymethyltransferase from Pyrobaculum neutrophilum (strain DSM 2338 / JCM 9278 / NBRC 100436 / V24Sta) (Thermoproteus neutrophilus).